The primary structure comprises 21 residues: Conchiolin protein p20 (21 aa).

The segment covering 1–14 (YQRXSRYYYYXGPP) has biased composition (low complexity). A disordered region spans residues 1–21 (YQRXSRYYYYXGPPDDIDDRY).

It belongs to the N16 matrix protein family. Homooligomer; disulfide-linked. May also be disulfide-linked to insoluble organic matrix. Post-translationally, according to PubMed:11250534, amino acids 4 and 11 may be sulfated or phosphorylated. By similarity with the N14 matrix protein, amino-acid 4 may be a cysteine involved in a disulfide bond. As to expression, component of conchiolin, the organic matrix of nacre. Is dispersed in calcium carbonate and also linked by disulfide bonds to the organic core of nacre.

The protein localises to the secreted. It is found in the extracellular space. It localises to the extracellular matrix. In terms of biological role, may be specifically involved in the formation of the nacreous layer. The chain is Conchiolin protein p20 from Pinctada maxima (Silver-lipped pearl oyster).